Here is a 229-residue protein sequence, read N- to C-terminus: MLICVPGILSKDDVAEFRHIMDSSDWEDGRSTAGAQSAMVKRNEQLPPDSEVARKLGHRIISAMTANPRFLAAAIPQHIFPPLFNRYAADSGHHFGIHVDNAVRGDKLTGLRIRTDLSVTLFLSEPEEYDGGELVIEDLYGSHEVKLPAGDLVLYPASSLHMVTPVTRGVRIASFFWLQSMIRDPLARSMIFDLDTTIQDLSRRMGRDDPEMVRLTGLYHNLIRYWAET.

One can recognise a Fe2OG dioxygenase domain in the interval His-78 to Ser-180. Residues His-98, Asp-100, and His-161 each coordinate Fe cation. Residue Arg-171 coordinates 2-oxoglutarate.

Fe(2+) is required as a cofactor. It depends on L-ascorbate as a cofactor.

The sequence is that of PKHD-type hydroxylase BBta_1313 from Bradyrhizobium sp. (strain BTAi1 / ATCC BAA-1182).